A 493-amino-acid polypeptide reads, in one-letter code: Cytochrome c-552 (493 aa).

A signal peptide spans 1-25; that stretch reads MEKKLKSWQGWLLFCGAMAVVFVLG. A heme c-binding site is contributed by histidine 116. Heme is bound by residues cysteine 144, cysteine 147, and lysine 148. Heme c is bound by residues cysteine 182, cysteine 185, histidine 186, cysteine 224, cysteine 227, and histidine 228. Ca(2+)-binding residues include glutamate 230, tyrosine 231, lysine 276, and glutamine 278. Tyrosine 231 contacts substrate. Position 279 (histidine 279) interacts with substrate. Heme c contacts are provided by histidine 290, cysteine 297, cysteine 300, histidine 301, histidine 315, cysteine 328, cysteine 331, histidine 332, and histidine 407.

Belongs to the cytochrome c-552 family. The cofactor is Ca(2+). It depends on heme c as a cofactor.

The protein localises to the periplasm. The catalysed reaction is 6 Fe(III)-[cytochrome c] + NH4(+) + 2 H2O = 6 Fe(II)-[cytochrome c] + nitrite + 8 H(+). It participates in nitrogen metabolism; nitrate reduction (assimilation). Its function is as follows. Catalyzes the reduction of nitrite to ammonia, consuming six electrons in the process. The sequence is that of Cytochrome c-552 from Bacteroides fragilis (strain YCH46).